A 1026-amino-acid polypeptide reads, in one-letter code: Multidrug resistance protein MdtC (1026 aa).

A run of 11 helical transmembrane segments spans residues 15 to 35 (ILIAAAITLCGILGFRLLPVA), 333 to 353 (EVEETLAISVALVILVVFLFL), 360 to 380 (LIPAVAVPVSLIGTFAAMYLC), 387 to 407 (LSLMALTIATGFVVDDAIVVL), 431 to 451 (VGFTVISMSLSLVAVFLPLLL), 463 to 483 (FAVTLSVAIGISLVVSLTLTP), 528 to 548 (LVGVVFLGTVALNIWLYIAIP), 853 to 873 (LILIVAAIATVYIVLGILYES), 897 to 917 (LFNAPFSLIALIGIMLLIGIV), 953 to 973 (PIMMTTLAALFGALPLVLSDG), and 984 to 1004 (ITIVGGLVMSQLLTLYTTPVV).

The protein belongs to the resistance-nodulation-cell division (RND) (TC 2.A.6) family. MdtC subfamily. In terms of assembly, part of a tripartite efflux system composed of MdtA, MdtB and MdtC. MdtC forms a heteromultimer with MdtB.

It localises to the cell inner membrane. The chain is Multidrug resistance protein MdtC from Salmonella heidelberg (strain SL476).